The sequence spans 138 residues: Small ribosomal subunit protein uS11c (138 aa).

Residues 1-25 (MAKSIPRTGSRRNVRSGSRKSTRRI) are disordered. Residues 9 to 25 (GSRRNVRSGSRKSTRRI) are compositionally biased toward basic residues.

Belongs to the universal ribosomal protein uS11 family. Part of the 30S ribosomal subunit.

It is found in the plastid. It localises to the chloroplast. This chain is Small ribosomal subunit protein uS11c, found in Eucalyptus globulus subsp. globulus (Tasmanian blue gum).